A 587-amino-acid polypeptide reads, in one-letter code: Laccase abr2 (587 aa).

An N-terminal signal peptide occupies residues 1 to 17 (MWYQSASLLGVAAVAQA). Plastocyanin-like domains follow at residues 41 to 137 (IFVN…VHIR) and 168 to 350 (LVML…ANDG). N71 carries N-linked (GlcNAc...) asparagine glycosylation. Positions 75, 77, 119, and 121 each coordinate Cu cation. 4 N-linked (GlcNAc...) asparagine glycosylation sites follow: N228, N383, N420, and N462. Positions 397–577 (PPYPAISPAS…ILMDGVDVWP (181 aa)) constitute a Plastocyanin-like 3 domain. H487 serves as a coordination point for Cu cation. The N-linked (GlcNAc...) asparagine glycan is linked to N504.

It belongs to the multicopper oxidase family.

It is found in the cell surface. It participates in pigment biosynthesis; melanin biosynthesis. Laccase; part of the gene cluster that mediates the biosynthesis of dihydroxynaphthalene (DHN)-melanin, a bluish-green pigment and a structural component of the conidial wall. The first step of the pathway is the production of the heptaketide naphtopyrone YWA1 by the polyketide synthase alb1 though condensation of acetyl-CoA with malonyl-CoA. The naphtopyrone YWA1 is then converted to the pentaketide 1,3,6,8-tetrahydroxynaphthalene (1,3,6,8-THN) by the heptaketide hydrolyase ayg1 though chain-length shortening. 1,3,6,8-THN is substrate of the hydroxynaphthalene reductase arp2 to yield scytalone. The scytalone dehydratase arp1 then reduces scytalone to 1,3,8-THN. 1,3,8-THN is also substrate of the hydroxynaphthalene reductase arp2 to yield vermelone. Vermelone is further converted by the multicopper oxidase abr1 to 1,8-DHN. Finally the laccase abr2 transforms 1,8-DHN to DHN-melanin. DHN-melanin biosynthesis appears to be initiated in endosomes where early enzymes (abl1, ayg1, arp1 and arp2) localize, with exocytosis leading to melanin deposition on the cell surface where late enzymes (abr1 and abr2) localize. DHN-melanin is an important structural component of the outer cell wall and is required for the presence of conidial surface hydrophobins. DHN-melanin also plays a crucial role in fungal virulence, including a protective role against the host's immune defenses. DHN-melanin also protects conidia against amoeba predation. This is Laccase abr2 from Aspergillus fumigatus (strain ATCC MYA-4609 / CBS 101355 / FGSC A1100 / Af293) (Neosartorya fumigata).